The sequence spans 354 residues: Protein RecA (354 aa).

Position 67-74 (67-74 (GPESSGKT)) interacts with ATP.

This sequence belongs to the RecA family.

The protein resides in the cytoplasm. Functionally, can catalyze the hydrolysis of ATP in the presence of single-stranded DNA, the ATP-dependent uptake of single-stranded DNA by duplex DNA, and the ATP-dependent hybridization of homologous single-stranded DNAs. It interacts with LexA causing its activation and leading to its autocatalytic cleavage. This Serratia marcescens protein is Protein RecA.